A 102-amino-acid chain; its full sequence is Hemoglobin subunit beta-Z (102 aa).

The Globin domain occupies 1–102 (FGNLSSAQAI…VANALSHKYH (102 aa)). Heme b is bound by residues His-19 and His-48.

Belongs to the globin family. As to quaternary structure, heterotetramer of two alpha chains and two beta chains.

Its function is as follows. This is an embryonic beta chain. This chain is Hemoglobin subunit beta-Z (HBBZ), found in Mesocricetus auratus (Golden hamster).